A 162-amino-acid chain; its full sequence is Ribosomal RNA large subunit methyltransferase H (162 aa).

Residues L78 and G110 each coordinate S-adenosyl-L-methionine.

It belongs to the RNA methyltransferase RlmH family. As to quaternary structure, homodimer.

The protein localises to the cytoplasm. The catalysed reaction is pseudouridine(1915) in 23S rRNA + S-adenosyl-L-methionine = N(3)-methylpseudouridine(1915) in 23S rRNA + S-adenosyl-L-homocysteine + H(+). In terms of biological role, specifically methylates the pseudouridine at position 1915 (m3Psi1915) in 23S rRNA. The sequence is that of Ribosomal RNA large subunit methyltransferase H from Bradyrhizobium sp. (strain ORS 278).